The primary structure comprises 414 residues: MNDIFIGLQLREHFMAEENKKGGFWASLFGRNKKQDEPKIEPIIEEEKIKDIEPSIEKFEANDLVEEEKIQEISTALEPIEEIIEAKNLEDEFQPVVEIETREKPSEGGFFSRLVKGLLKTKQNIGAGFRGFFLGKKIDDELFEELEEQLLIADIGVPTTSKIIKNLTEHASRKELQDAELLYQQLKVEMADILEPVAQPLEIDSTKKPYVILMVGVNGVGKTTTIGKLARKFQAEGKSVMLAAGDTFRAAAVEQLQVWGERNHIPVVAQSTGSDSASVIFDAMQSAAARNIDILIADTAGRLQNKNNLMDELKKIVRVMKKYDETAPHEIMLTLDAGTGQNAISQAKLFNEAVGLTGISLTKLDGTAKGGVIFAIADQFKLPIRYIGVGEKIEDLREFNAKEFIEALFVHEEE.

GTP contacts are provided by residues 216-223, 298-302, and 362-365; these read GVNGVGKT, DTAGR, and TKLD.

It belongs to the GTP-binding SRP family. FtsY subfamily. As to quaternary structure, part of the signal recognition particle protein translocation system, which is composed of SRP and FtsY. SRP is a ribonucleoprotein composed of Ffh and a 4.5S RNA molecule.

It localises to the cell inner membrane. Its subcellular location is the cytoplasm. It carries out the reaction GTP + H2O = GDP + phosphate + H(+). Involved in targeting and insertion of nascent membrane proteins into the cytoplasmic membrane. Acts as a receptor for the complex formed by the signal recognition particle (SRP) and the ribosome-nascent chain (RNC). Interaction with SRP-RNC leads to the transfer of the RNC complex to the Sec translocase for insertion into the membrane, the hydrolysis of GTP by both Ffh and FtsY, and the dissociation of the SRP-FtsY complex into the individual components. This is Signal recognition particle receptor FtsY from Haemophilus influenzae (strain ATCC 51907 / DSM 11121 / KW20 / Rd).